The sequence spans 355 residues: UDP-N-acetylglucosamine--N-acetylmuramyl-(pentapeptide) pyrophosphoryl-undecaprenol N-acetylglucosamine transferase (355 aa).

UDP-N-acetyl-alpha-D-glucosamine contacts are provided by residues 14–16 (TGG), Asn126, Arg162, Ser190, Ile243, 262–267 (ALTVSE), and Gln287.

This sequence belongs to the glycosyltransferase 28 family. MurG subfamily.

It localises to the cell inner membrane. The catalysed reaction is di-trans,octa-cis-undecaprenyl diphospho-N-acetyl-alpha-D-muramoyl-L-alanyl-D-glutamyl-meso-2,6-diaminopimeloyl-D-alanyl-D-alanine + UDP-N-acetyl-alpha-D-glucosamine = di-trans,octa-cis-undecaprenyl diphospho-[N-acetyl-alpha-D-glucosaminyl-(1-&gt;4)]-N-acetyl-alpha-D-muramoyl-L-alanyl-D-glutamyl-meso-2,6-diaminopimeloyl-D-alanyl-D-alanine + UDP + H(+). It functions in the pathway cell wall biogenesis; peptidoglycan biosynthesis. Cell wall formation. Catalyzes the transfer of a GlcNAc subunit on undecaprenyl-pyrophosphoryl-MurNAc-pentapeptide (lipid intermediate I) to form undecaprenyl-pyrophosphoryl-MurNAc-(pentapeptide)GlcNAc (lipid intermediate II). The sequence is that of UDP-N-acetylglucosamine--N-acetylmuramyl-(pentapeptide) pyrophosphoryl-undecaprenol N-acetylglucosamine transferase from Vibrio vulnificus (strain CMCP6).